A 273-amino-acid chain; its full sequence is Large ribosomal subunit protein uL2cz/uL2cy (273 aa).

Disordered regions lie at residues 1 to 25 (MAIH…VKSN) and 224 to 273 (NPVD…RRRK).

It belongs to the universal ribosomal protein uL2 family. As to quaternary structure, part of the 50S ribosomal subunit.

Its subcellular location is the plastid. It is found in the chloroplast. The sequence is that of Large ribosomal subunit protein uL2cz/uL2cy (rpl2-A) from Phalaenopsis aphrodite subsp. formosana (Moth orchid).